Here is a 180-residue protein sequence, read N- to C-terminus: NADH-quinone oxidoreductase subunit I (180 aa).

2 4Fe-4S ferredoxin-type domains span residues 48 to 80 and 90 to 119; these read IVLTRDPDGQERCVACNLCAVACPVGCISLQKA and EFFRINFSRCIFCGMCEEACPTTAIQLTPD. [4Fe-4S] cluster is bound by residues cysteine 60, cysteine 63, cysteine 66, cysteine 70, cysteine 99, cysteine 102, cysteine 105, and cysteine 109.

Belongs to the complex I 23 kDa subunit family. In terms of assembly, NDH-1 is composed of 13 different subunits. Subunits NuoA, H, J, K, L, M, N constitute the membrane sector of the complex. [4Fe-4S] cluster is required as a cofactor.

It is found in the cell inner membrane. The catalysed reaction is a quinone + NADH + 5 H(+)(in) = a quinol + NAD(+) + 4 H(+)(out). Functionally, NDH-1 shuttles electrons from NADH, via FMN and iron-sulfur (Fe-S) centers, to quinones in the respiratory chain. The immediate electron acceptor for the enzyme in this species is believed to be ubiquinone. Couples the redox reaction to proton translocation (for every two electrons transferred, four hydrogen ions are translocated across the cytoplasmic membrane), and thus conserves the redox energy in a proton gradient. The chain is NADH-quinone oxidoreductase subunit I from Cronobacter sakazakii (strain ATCC BAA-894) (Enterobacter sakazakii).